The primary structure comprises 132 residues: MSMTDNVADMLTRIRNAYKSKLINVSFPSSKIKNSILDVLQKEGYIKDYVITQKNNISYTKVALKYSINGEASICEIRRVSKPGKRVYSAIKDLKGYYNNMGIYILSTPYGVMSDREAHIKNVGGEVICKVF.

It belongs to the universal ribosomal protein uS8 family. In terms of assembly, part of the 30S ribosomal subunit. Contacts proteins S5 and S12.

In terms of biological role, one of the primary rRNA binding proteins, it binds directly to 16S rRNA central domain where it helps coordinate assembly of the platform of the 30S subunit. The polypeptide is Small ribosomal subunit protein uS8 (Rickettsia typhi (strain ATCC VR-144 / Wilmington)).